Here is a 280-residue protein sequence, read N- to C-terminus: Fructose-1,6-bisphosphatase class 1 (280 aa).

E64, D83, L85, and D86 together coordinate Mg(2+). Residues 86–89, Y190, and K221 contribute to the substrate site; that span reads DGSS. A Mg(2+)-binding site is contributed by E227.

It belongs to the FBPase class 1 family. Homotetramer. It depends on Mg(2+) as a cofactor.

The protein resides in the cytoplasm. The enzyme catalyses beta-D-fructose 1,6-bisphosphate + H2O = beta-D-fructose 6-phosphate + phosphate. It functions in the pathway carbohydrate biosynthesis; gluconeogenesis. The sequence is that of Fructose-1,6-bisphosphatase class 1 from Campylobacter hominis (strain ATCC BAA-381 / DSM 21671 / CCUG 45161 / LMG 19568 / NCTC 13146 / CH001A).